Here is a 214-residue protein sequence, read N- to C-terminus: 3-isopropylmalate dehydratase small subunit (214 aa).

Belongs to the LeuD family. LeuD type 1 subfamily. In terms of assembly, heterodimer of LeuC and LeuD.

It carries out the reaction (2R,3S)-3-isopropylmalate = (2S)-2-isopropylmalate. Its pathway is amino-acid biosynthesis; L-leucine biosynthesis; L-leucine from 3-methyl-2-oxobutanoate: step 2/4. Its function is as follows. Catalyzes the isomerization between 2-isopropylmalate and 3-isopropylmalate, via the formation of 2-isopropylmaleate. The chain is 3-isopropylmalate dehydratase small subunit from Pseudomonas putida (strain ATCC 47054 / DSM 6125 / CFBP 8728 / NCIMB 11950 / KT2440).